The sequence spans 488 residues: Zinc metalloproteinase-disintegrin VMP-II (488 aa).

The N-terminal stretch at 1-20 is a signal peptide; it reads MIQVLLVTICLAVFPYQGSS. Positions 21-191 are excised as a propeptide; it reads IILESGNVND…KASQSNIPPE (171 aa). Positions 198-396 constitute a Peptidase M12B domain; the sequence is RYIELVVVAD…STTRCLHNEP (199 aa). Residues glutamate 201 and aspartate 285 each coordinate Ca(2+). An N-linked (GlcNAc...) asparagine glycan is attached at asparagine 296. Disulfide bonds link cysteine 309/cysteine 391, cysteine 349/cysteine 373, and cysteine 351/cysteine 356. Histidine 334 contributes to the Zn(2+) binding site. Glutamate 335 is a catalytic residue. Residues histidine 338 and histidine 344 each coordinate Zn(2+). Cysteine 391, asparagine 394, asparagine 409, glutamate 413, glutamate 416, and aspartate 419 together coordinate Ca(2+). Positions 404-488 constitute a Disintegrin domain; the sequence is PPFCGNYFKE…ADCPRNGLYG (85 aa). Cystine bridges form between cysteine 407–cysteine 426, cysteine 418–cysteine 436, cysteine 420–cysteine 431, cysteine 430–cysteine 453, cysteine 444–cysteine 450, cysteine 449–cysteine 474, and cysteine 462–cysteine 481. Positions 466-468 match the Cell attachment site motif; that stretch reads RGD.

The protein belongs to the venom metalloproteinase (M12B) family. P-II subfamily. P-IIb sub-subfamily. In terms of assembly, homodimer; disulfide-linked (disintegrin). The cofactor is Zn(2+). In terms of tissue distribution, expressed by the venom gland.

Its subcellular location is the secreted. Functionally, zinc metalloproteinase-disintegrin VMP-II: inhibits ADP-induced platelet aggregation (probably by binding integrin alpha-IIb/beta-3 (ITGA2B/ITGB3)) and degrades fibrinogen. Its function is as follows. Recombinant disintegrin r-Cam-dis (413-488): this recombinant protein inhibits platelet adhesion to fibrinogen (IC(50) is 1 nM), inhibits collagen- (IC(50) is 18 nM) and ADP-induced (IC(50) is 6 nM) platelet aggregation, and also inhibits platelet function on clot retraction. May act by binding integrin alpha-IIb/beta-3 (ITGA2B/ITGB3). This chain is Zinc metalloproteinase-disintegrin VMP-II, found in Crotalus adamanteus (Eastern diamondback rattlesnake).